Consider the following 411-residue polypeptide: MLDLKNLQNNFDEVTKKLKSKKVDENILKKLAELFASLKKEKTALEEFQAFQNKFSKELATAEDKESLKAKLSENKSKINEQSTKVNVLENELEEIAHAIPNIPDECVPVGEDENENVELKKVLNPPSFDFTPKEHFELGESLNWLDFVRGVKISQSRFCVLKNEGALLSRALVNYMIDFNRSRGFEFVNVPFLVNGATMFGTGQLPKFKEDMYKVDDEDLYLISTSEIPITNLYSGEILTSETLPIKMTCYSACFRKEAGSAGRDTRGIIRQHQFEKVELVSITKPEQSDSVFNEMLECASDLLSSLGLAHRHLMLCTGDLGFSAAKTVDLEVWLPGQNKYREISSVSNCRDFQARRAKIRYKNEQGKNELVHTLNGSSLAVGRTLVAIMENYQDKEGKIHIPDALKKYF.

L-serine is bound at residue 226 to 228 (TSE). Residue 257-259 (RKE) participates in ATP binding. Glutamate 280 lines the L-serine pocket. 344 to 347 (EISS) provides a ligand contact to ATP. Serine 379 is a binding site for L-serine.

The protein belongs to the class-II aminoacyl-tRNA synthetase family. Type-1 seryl-tRNA synthetase subfamily. In terms of assembly, homodimer. The tRNA molecule binds across the dimer.

Its subcellular location is the cytoplasm. The enzyme catalyses tRNA(Ser) + L-serine + ATP = L-seryl-tRNA(Ser) + AMP + diphosphate + H(+). The catalysed reaction is tRNA(Sec) + L-serine + ATP = L-seryl-tRNA(Sec) + AMP + diphosphate + H(+). It participates in aminoacyl-tRNA biosynthesis; selenocysteinyl-tRNA(Sec) biosynthesis; L-seryl-tRNA(Sec) from L-serine and tRNA(Sec): step 1/1. In terms of biological role, catalyzes the attachment of serine to tRNA(Ser). Is also able to aminoacylate tRNA(Sec) with serine, to form the misacylated tRNA L-seryl-tRNA(Sec), which will be further converted into selenocysteinyl-tRNA(Sec). This Campylobacter jejuni subsp. doylei (strain ATCC BAA-1458 / RM4099 / 269.97) protein is Serine--tRNA ligase.